Reading from the N-terminus, the 131-residue chain is DNA-directed RNA polymerase subunit omega (131 aa).

Residues 78–131 (DEPEAEAVPALSSAPDAAQSDAMGDVQFDRMTEEDLLRGLEGLVPPAATDDDGE) form a disordered region. A compositionally biased stretch (basic and acidic residues) spans 104–115 (QFDRMTEEDLLR).

It belongs to the RNA polymerase subunit omega family. The RNAP catalytic core consists of 2 alpha, 1 beta, 1 beta' and 1 omega subunit. When a sigma factor is associated with the core the holoenzyme is formed, which can initiate transcription.

It catalyses the reaction RNA(n) + a ribonucleoside 5'-triphosphate = RNA(n+1) + diphosphate. Its function is as follows. Promotes RNA polymerase assembly. Latches the N- and C-terminal regions of the beta' subunit thereby facilitating its interaction with the beta and alpha subunits. This chain is DNA-directed RNA polymerase subunit omega, found in Beijerinckia indica subsp. indica (strain ATCC 9039 / DSM 1715 / NCIMB 8712).